We begin with the raw amino-acid sequence, 1598 residues long: MEQFGGPSGFMPPASYTAPLGKYPTKQPSAAYPSDGGRHATKENPRPAEGQASRQSSSVPSAMASKPIQDPEGHSAQPTSSYCRAQTPRSTPLPVALDEEARLSQYEVIRQIGAGRFGEVFIIRHKATKALLCWKLVFYKGLREKEKKQLVSEVNVMRELRHANIVRYHDRIVCRSRQCLYIVMEYCDAGDLAKQIEAAHKHHGGIDQDRIVLVVVQLIHALAYCHEGVGQERRRVLHRDLKPCNIFLASHPEYPDDSSRCIAKLGDFGLSRHLNMHSMAHSCVGTPYYWSPELLEDGQKTYNVKSDMWALGCVIYEMCTGKTPFAQAQTMPQLKERVRCGPVLPVPGFSDSLNALMASLLQPNPNNRPSALQCLGYTIFRGCSYTPPPLYRSSSAPSWTPRNASPARGSPSSAVSTVSTVTTSPGSSSRTSFSAPSSHDAAASSPASASASSRYQHQRSSSYSSDSAGPSGASAPSQKAPGPGRPPETPSRESFDLASKARPGFFAEAPPPHAFAEASPPESHASEFLPPANGAANEARNERTQRDRTRRAASATAAAAVSAFERQQREGRSMSPDPSAPLASIEEEEEGEGDDAGCGSLGSGSGVTRRMPGASLNREDRREAPGLRHADTHKRDDRDGAIWTGRREEAPFSRPGSELARDFGAASQNKVDTSRFSGASSGKPRPGNPQNEDRASFASDTSARQTVYLSGLSRRCSEPPAAFHSAVSPWDPAPPRLSSAASSSSSSRAVSPSSLRRASSREMKYPTDDRPAVAAGSSGVALARAERGPEPGAPWGNEETEGLHVHGRPSAAPASSFSSERTSRPGHPDEARESEHCFQGRGRFAEAEASPATEGKDPRDSGFEERSGRRDEGRTDGGEAQSFGYWPNGRSDEARDRLGAPSVSPFSSKRITRRSSTAAGLSTYASPSDPAPSARAPAEWRRGAAGSSTVSAAGACGRFLPSPRSWQGNEKSFPSSSDHPSAYPALPHPAAPAYPEPGAQASNQFPRRRQSAFPSVKRLDYEEEHASSACLPTLLSPRFPHHPVSRPAGGVSPRSSQRQALAPTLAGMTFERRLSAGPLSSAPFSAPQERTTRLVGHRHALAADAERAEAPFSHAFRPGHHDRTPVGARRVPPRAETPGVSLDPGFRTGGPLDRGPVGSGGLEGQSFDFAHPTHASSEKKEAETEWSNPTAPVFYSPRSPRNDLPPGDGARSPYSAHLRPGVSEACSSFSVPPTERYEDDKNSHHAGSGGAFSPPTFGSPTPGPVPVGNERTFGRNPSPAATCASFSAKTGLRTPAPNGLAGDSGAFRSTNSLQRTPMSRRVSAPFGAGSAEGATAFGSRYASSGSFSKKFPQGSSSGVHEGGGAFGRRQEGDVSRVDAHGSVSPRSFSFLQRSDAPLSRGQPEGSHFQKHGETRASPDFARKGDSTQTHASGGRDFSQSGPFETQDFTFGEQPTRETRHMAPSPRGIERGGPQGSFVGHDTSFSVYAPRAGHAEGVESGCSAFEAPSESLSRRDGEADRENTVPNANGQMPVSGMPASKQTYGDDCDLYDNSAWTAQKHAPENFHAAVAPYPSSLLTGFAEGQQKAASRSSCLGGDR.

The Protein kinase domain occupies 106 to 380 (YEVIRQIGAG…ALQCLGYTIF (275 aa)). Residues 112–120 (IGAGRFGEV) and lysine 135 each bind ATP. The Proton acceptor role is filled by aspartate 240.

It belongs to the protein kinase superfamily. NEK Ser/Thr protein kinase family. NIMA subfamily.

Its subcellular location is the cytoplasm. It is found in the cytoskeleton. The protein localises to the microtubule organizing center. It localises to the centrosome. The protein resides in the spindle pole. It catalyses the reaction L-seryl-[protein] + ATP = O-phospho-L-seryl-[protein] + ADP + H(+). The catalysed reaction is L-threonyl-[protein] + ATP = O-phospho-L-threonyl-[protein] + ADP + H(+). Phosphorylation status of the T-loop (amino acids 267-293) modulates kinase activity and subcellular localization of the protein. Probable serine/threonine-protein kinase. Involved in controlling centrosome splitting. Promotes separation of the centrosome outer cores. The sequence is that of Serine/threonine-protein kinase Nek1 from Toxoplasma gondii (strain ATCC 50611 / Me49).